The sequence spans 71 residues: UPF0346 protein BCB4264_A2283 (71 aa).

Belongs to the UPF0346 family.

The sequence is that of UPF0346 protein BCB4264_A2283 from Bacillus cereus (strain B4264).